The primary structure comprises 705 residues: Fatty acid oxidation complex subunit alpha (705 aa).

An enoyl-CoA hydratase region spans residues 1–188 (MGKTFNLTRR…KMGLVNDVVP (188 aa)). The segment at 308–705 (RKVKKAVILG…AMAAEKARFF (398 aa)) is 3-hydroxyacyl-CoA dehydrogenase.

In the N-terminal section; belongs to the enoyl-CoA hydratase/isomerase family. The protein in the central section; belongs to the 3-hydroxyacyl-CoA dehydrogenase family. In terms of assembly, heterotetramer of two alpha chains (FadJ) and two beta chains (FadI).

It is found in the cytoplasm. The catalysed reaction is a (3S)-3-hydroxyacyl-CoA = a (2E)-enoyl-CoA + H2O. It carries out the reaction a 4-saturated-(3S)-3-hydroxyacyl-CoA = a (3E)-enoyl-CoA + H2O. It catalyses the reaction a (3S)-3-hydroxyacyl-CoA + NAD(+) = a 3-oxoacyl-CoA + NADH + H(+). The enzyme catalyses (3S)-3-hydroxybutanoyl-CoA = (3R)-3-hydroxybutanoyl-CoA. The protein operates within lipid metabolism; fatty acid beta-oxidation. Catalyzes the formation of a hydroxyacyl-CoA by addition of water on enoyl-CoA. Also exhibits 3-hydroxyacyl-CoA epimerase and 3-hydroxyacyl-CoA dehydrogenase activities. The polypeptide is Fatty acid oxidation complex subunit alpha (Shewanella oneidensis (strain ATCC 700550 / JCM 31522 / CIP 106686 / LMG 19005 / NCIMB 14063 / MR-1)).